The sequence spans 1050 residues: Self-sufficient cytochrome P450 monooxygenase CYP505E5 (1050 aa).

Cys-405 is a heme binding site. Residues Thr-461–Ala-495 are disordered. Residues Val-500–Leu-641 form the Flavodoxin-like domain. Residues Ser-506 to Thr-510 and Val-585 to Ala-617 contribute to the FMN site. The region spanning Lys-679 to Pro-907 is the FAD-binding FR-type domain.

It in the N-terminal section; belongs to the cytochrome P450 family. The cofactor is FAD. Requires FMN as cofactor. Heme is required as a cofactor.

The enzyme catalyses 2 oxidized [cytochrome P450] + NADPH = 2 reduced [cytochrome P450] + NADP(+) + H(+). It catalyses the reaction an organic molecule + reduced [NADPH--hemoprotein reductase] + O2 = an alcohol + oxidized [NADPH--hemoprotein reductase] + H2O + H(+). It carries out the reaction dodecanoate + reduced [NADPH--hemoprotein reductase] + O2 = 5-hydroxydodecanoate + oxidized [NADPH--hemoprotein reductase] + H2O + H(+). The catalysed reaction is tetradecanoate + reduced [NADPH--hemoprotein reductase] + O2 = 7-hydroxytetradecanoate + oxidized [NADPH--hemoprotein reductase] + H2O + H(+). The enzyme catalyses dodecan-1-ol + reduced [NADPH--hemoprotein reductase] + O2 = 1,5-dodecanediol + oxidized [NADPH--hemoprotein reductase] + H2O + H(+). It catalyses the reaction dodecan-1-ol + reduced [NADPH--hemoprotein reductase] + O2 = 1,4-dodecanediol + oxidized [NADPH--hemoprotein reductase] + H2O + H(+). It carries out the reaction dodecan-1-ol + reduced [NADPH--hemoprotein reductase] + O2 = 1,6-dodecanediol + oxidized [NADPH--hemoprotein reductase] + H2O + H(+). In terms of biological role, self-sufficient cytochrome P450 monooxygenase that catalyzes the regioselective in-chain hydroxylation of alkanes, fatty alcohols, and fatty acids at the omega-7 position. Performs hydroxylation of C10-C16 n-alkanes and C12 and C14 fatty alcohols; and thereby enables the one step biocatalytic synthesis of rare alcohols such as 5-dodecanol and 7-tetradecanol. Converts 1-dodecanol into 1,5-dodecanediol as major product with very little sub-terminally hydroxylated products with the 1,4-dodecanediol and 1,6-dodecanediol more abundant. Converts dodecanoic acid to 5-hydroxydodecanoic acid which can be further converted into delta-dodecalactone by lactonization of the 5-hydroxy acid at low pH. Also gives sub-terminal hydroxylation of dodecanoic acid with 9-hydroxydodecanoic acid being the second most abundant product. The chain is Self-sufficient cytochrome P450 monooxygenase CYP505E5 from Aspergillus kawachii (strain NBRC 4308) (White koji mold).